Here is a 246-residue protein sequence, read N- to C-terminus: tRNA (guanine-N(1)-)-methyltransferase (246 aa).

S-adenosyl-L-methionine is bound by residues Gly117 and 137–142 (IGDYVL).

This sequence belongs to the RNA methyltransferase TrmD family. As to quaternary structure, homodimer.

Its subcellular location is the cytoplasm. It catalyses the reaction guanosine(37) in tRNA + S-adenosyl-L-methionine = N(1)-methylguanosine(37) in tRNA + S-adenosyl-L-homocysteine + H(+). In terms of biological role, specifically methylates guanosine-37 in various tRNAs. The polypeptide is tRNA (guanine-N(1)-)-methyltransferase (Acinetobacter baumannii (strain SDF)).